The chain runs to 397 residues: Succinyl-diaminopimelate desuccinylase (397 aa).

Residue His-73 coordinates Zn(2+). The active site involves Asp-75. Asp-106 is a binding site for Zn(2+). The Proton acceptor role is filled by Glu-140. 3 residues coordinate Zn(2+): Glu-141, Glu-169, and His-366.

This sequence belongs to the peptidase M20A family. DapE subfamily. Homodimer. It depends on Zn(2+) as a cofactor. The cofactor is Co(2+).

It catalyses the reaction N-succinyl-(2S,6S)-2,6-diaminopimelate + H2O = (2S,6S)-2,6-diaminopimelate + succinate. Its pathway is amino-acid biosynthesis; L-lysine biosynthesis via DAP pathway; LL-2,6-diaminopimelate from (S)-tetrahydrodipicolinate (succinylase route): step 3/3. Its function is as follows. Catalyzes the hydrolysis of N-succinyl-L,L-diaminopimelic acid (SDAP), forming succinate and LL-2,6-diaminopimelate (DAP), an intermediate involved in the bacterial biosynthesis of lysine and meso-diaminopimelic acid, an essential component of bacterial cell walls. The sequence is that of Succinyl-diaminopimelate desuccinylase from Rhizobium meliloti (strain 1021) (Ensifer meliloti).